The chain runs to 448 residues: Asparagine--tRNA ligase (448 aa).

It belongs to the class-II aminoacyl-tRNA synthetase family. In terms of assembly, homodimer.

Its subcellular location is the cytoplasm. The catalysed reaction is tRNA(Asn) + L-asparagine + ATP = L-asparaginyl-tRNA(Asn) + AMP + diphosphate + H(+). This chain is Asparagine--tRNA ligase, found in Streptococcus pyogenes serotype M2 (strain MGAS10270).